A 156-amino-acid chain; its full sequence is Snaclec A14 (156 aa).

The signal sequence occupies residues 1-23; that stretch reads MGRFIFVRVGLLVVFLSLSGTGA. 3 disulfide bridges follow: cysteine 27/cysteine 38, cysteine 55/cysteine 152, and cysteine 127/cysteine 144. Positions 34–153 constitute a C-type lectin domain; the sequence is YDQHCYKAFD…CGDDYPFVCK (120 aa). N-linked (GlcNAc...) asparagine glycosylation occurs at asparagine 141.

This sequence belongs to the snaclec family. As to quaternary structure, heterodimer; disulfide-linked. Expressed by the venom gland.

The protein localises to the secreted. In terms of biological role, interferes with one step of hemostasis (modulation of platelet aggregation, or coagulation cascade, for example). The protein is Snaclec A14 of Macrovipera lebetinus (Levantine viper).